Reading from the N-terminus, the 198-residue chain is Peptide deformylase (198 aa).

Fe cation is bound by residues Cys-123 and His-167. Residue Glu-168 is part of the active site. Residue His-171 coordinates Fe cation.

The protein belongs to the polypeptide deformylase family. Requires Fe(2+) as cofactor.

It carries out the reaction N-terminal N-formyl-L-methionyl-[peptide] + H2O = N-terminal L-methionyl-[peptide] + formate. Its function is as follows. Removes the formyl group from the N-terminal Met of newly synthesized proteins. Requires at least a dipeptide for an efficient rate of reaction. N-terminal L-methionine is a prerequisite for activity but the enzyme has broad specificity at other positions. This Ureaplasma parvum serovar 3 (strain ATCC 27815 / 27 / NCTC 11736) protein is Peptide deformylase.